The primary structure comprises 565 residues: Thiol:disulfide interchange protein DsbD (565 aa).

Positions 1–19 are cleaved as a signal peptide; that stretch reads MAQRIFTLILLLCSTSVFA. Disulfide bonds link C122–C128 and C182–C304. Helical transmembrane passes span 163–183, 208–228, 243–263, 296–316, 323–343, 365–385, and 386–406; these read LPFS…TPCV, LLTF…GLVV, YVLI…FGLF, IAGL…LLYI, WLGG…LMLI, FGFV…GDIW, and GLRL…ITSL. The Thioredoxin domain occupies 434–565; it reads WAFGATHTAQ…FSAHLRDRQP (132 aa). A disulfide bridge links C480 with C483.

The protein belongs to the thioredoxin family. DsbD subfamily.

It localises to the cell inner membrane. The catalysed reaction is [protein]-dithiol + NAD(+) = [protein]-disulfide + NADH + H(+). It carries out the reaction [protein]-dithiol + NADP(+) = [protein]-disulfide + NADPH + H(+). Its function is as follows. Required to facilitate the formation of correct disulfide bonds in some periplasmic proteins and for the assembly of the periplasmic c-type cytochromes. Acts by transferring electrons from cytoplasmic thioredoxin to the periplasm. This transfer involves a cascade of disulfide bond formation and reduction steps. This is Thiol:disulfide interchange protein DsbD from Shigella dysenteriae serotype 1 (strain Sd197).